The primary structure comprises 89 residues: UPF0297 protein SMU_2079c (89 aa).

This sequence belongs to the UPF0297 family.

In Streptococcus mutans serotype c (strain ATCC 700610 / UA159), this protein is UPF0297 protein SMU_2079c.